The sequence spans 474 residues: Probable multidrug resistance protein NorM (474 aa).

The next 12 membrane-spanning stretches (helical) occupy residues 33-50 (LWLA…IAMM), 65-87 (VAAA…GLVS), 108-130 (SLRV…QLYG), 150-172 (YLDG…GLMG), 179-201 (PALW…LIHG), 211-233 (FGAG…VVCV), 258-280 (LLQL…GAAA), 295-317 (QIAL…AATV), 334-356 (AGFA…VALT), 376-398 (TLTA…QVVA), 410-432 (VPLL…VLGF), and 436-458 (LGPF…LLVW).

It belongs to the multi antimicrobial extrusion (MATE) (TC 2.A.66.1) family.

The protein resides in the cell inner membrane. Functionally, multidrug efflux pump. The chain is Probable multidrug resistance protein NorM (norM) from Rhodopseudomonas palustris (strain ATCC BAA-98 / CGA009).